Here is a 320-residue protein sequence, read N- to C-terminus: Olfactory receptor 12D1 (320 aa).

Over 1–23 (MLNTTSVTEFLLLGVTDIQELQP) the chain is Extracellular. N3 is a glycosylation site (N-linked (GlcNAc...) asparagine). The helical transmembrane segment at 24-44 (FLFVVFLTIYFISVAGNGAIL) threads the bilayer. Residues 45-55 (MIVISDPRLHS) lie on the Cytoplasmic side of the membrane. The chain crosses the membrane as a helical span at residues 56–76 (PMYFFLGNLSCLDICYSSVTL). Over 77–97 (PKMLQNFLSAHKAISFLGCIS) the chain is Extracellular. C95 and C177 form a disulfide bridge. Residues 98–118 (QLHFFHFLGSTEAMLLAVMAF) traverse the membrane as a helical segment. Residues 119-141 (DRFVAICKPLRYTVIMNPQLCTQ) lie on the Cytoplasmic side of the membrane. A helical membrane pass occupies residues 142 to 162 (MAITIWMIGFFHALLHSLMTS). Residues 163–203 (RLNFCGSNRIYHFFCDVKPLLKLACGNTELNQWLLSTVTGT) are Extracellular-facing. The chain crosses the membrane as a helical span at residues 204 to 224 (IAMGPFFLTLLSYFYIITHLF). The Cytoplasmic segment spans residues 225–238 (FKTHSFSMLRKALS). A helical membrane pass occupies residues 239–259 (TCASHFMVVILLYAPVLFTYI). Residues 260–270 (HHASGTSMDQD) lie on the Extracellular side of the membrane. The helical transmembrane segment at 271–291 (RITAIMYTVVTPVLNPLIYTL) threads the bilayer. Topologically, residues 292 to 320 (RNKEVKGAFNRAMKRWLWPKEILKNSSEA) are cytoplasmic.

The protein belongs to the G-protein coupled receptor 1 family.

Its subcellular location is the cell membrane. Functionally, odorant receptor. The protein is Olfactory receptor 12D1 (OR12D1) of Homo sapiens (Human).